Here is a 561-residue protein sequence, read N- to C-terminus: Dihydroxy-acid dehydratase (561 aa).

Cysteine 50 provides a ligand contact to [2Fe-2S] cluster. Residue aspartate 82 participates in Mg(2+) binding. Cysteine 123 is a [2Fe-2S] cluster binding site. Aspartate 124 and lysine 125 together coordinate Mg(2+). Residue lysine 125 is modified to N6-carboxylysine. A [2Fe-2S] cluster-binding site is contributed by cysteine 195. Mg(2+) is bound at residue glutamate 447. Serine 473 (proton acceptor) is an active-site residue.

Belongs to the IlvD/Edd family. In terms of assembly, homodimer. [2Fe-2S] cluster serves as cofactor. Mg(2+) is required as a cofactor.

The catalysed reaction is (2R)-2,3-dihydroxy-3-methylbutanoate = 3-methyl-2-oxobutanoate + H2O. It catalyses the reaction (2R,3R)-2,3-dihydroxy-3-methylpentanoate = (S)-3-methyl-2-oxopentanoate + H2O. The protein operates within amino-acid biosynthesis; L-isoleucine biosynthesis; L-isoleucine from 2-oxobutanoate: step 3/4. It participates in amino-acid biosynthesis; L-valine biosynthesis; L-valine from pyruvate: step 3/4. Functions in the biosynthesis of branched-chain amino acids. Catalyzes the dehydration of (2R,3R)-2,3-dihydroxy-3-methylpentanoate (2,3-dihydroxy-3-methylvalerate) into 2-oxo-3-methylpentanoate (2-oxo-3-methylvalerate) and of (2R)-2,3-dihydroxy-3-methylbutanoate (2,3-dihydroxyisovalerate) into 2-oxo-3-methylbutanoate (2-oxoisovalerate), the penultimate precursor to L-isoleucine and L-valine, respectively. This Synechocystis sp. (strain ATCC 27184 / PCC 6803 / Kazusa) protein is Dihydroxy-acid dehydratase.